Here is a 491-residue protein sequence, read N- to C-terminus: Glutamate--tRNA ligase (491 aa).

Positions 10–20 (PSPTGYLHIGG) match the 'HIGH' region motif. The 'KMSKS' region signature appears at 243 to 247 (KISKR). Lys246 is a binding site for ATP.

This sequence belongs to the class-I aminoacyl-tRNA synthetase family. Glutamate--tRNA ligase type 1 subfamily. In terms of assembly, monomer.

It is found in the cytoplasm. The enzyme catalyses tRNA(Glu) + L-glutamate + ATP = L-glutamyl-tRNA(Glu) + AMP + diphosphate. Its function is as follows. Catalyzes the attachment of glutamate to tRNA(Glu) in a two-step reaction: glutamate is first activated by ATP to form Glu-AMP and then transferred to the acceptor end of tRNA(Glu). This Desulfotalea psychrophila (strain LSv54 / DSM 12343) protein is Glutamate--tRNA ligase.